A 179-amino-acid chain; its full sequence is Small ribosomal subunit protein uS7 (179 aa).

This sequence belongs to the universal ribosomal protein uS7 family. In terms of assembly, part of the 30S ribosomal subunit. Contacts proteins S9 and S11.

Functionally, one of the primary rRNA binding proteins, it binds directly to 16S rRNA where it nucleates assembly of the head domain of the 30S subunit. Is located at the subunit interface close to the decoding center, probably blocks exit of the E-site tRNA. In Shigella flexneri serotype 5b (strain 8401), this protein is Small ribosomal subunit protein uS7.